The sequence spans 770 residues: Protein PAT1 homolog 1 (770 aa).

Residues 1 to 26 are disordered; it reads MFRYESLEDCPLDEDEDAFQGLGEED. Residues 1–84 are region A; interaction with DDX6/RCK; that stretch reads MFRYESLEDC…EMDLLGDHEE (84 aa). An involved in nuclear foci localization region spans residues 1–397; that stretch reads MFRYESLEDC…HRSSHQDHLR (397 aa). Positions 7-26 are enriched in acidic residues; the sequence is LEDCPLDEDEDAFQGLGEED. Residues 85–388 form a region N; interaction with decapping machinery region; sequence NLAERLSKMV…LNGAGDRGSH (304 aa). Residues 86–95 carry the Nuclear export signal motif; sequence LAERLSKMVI. Residue S177 is modified to Phosphoserine. T178 carries the post-translational modification Phosphothreonine. A phosphoserine mark is found at S179 and S184. The residue at position 194 (T194) is a Phosphothreonine. Asymmetric dimethylarginine is present on residues R217, R223, and R263. Residues 223-397 form an involved in RNA-binding region; it reads RYPAPYGERM…HRSSHQDHLR (175 aa). S278 bears the Phosphoserine mark. R284 carries the post-translational modification Asymmetric dimethylarginine. The segment covering 314–323 has biased composition (low complexity); sequence GFRAFFSAPP. 2 disordered regions span residues 314 to 344 and 360 to 399; these read GFRA…QNLR and QHRR…LRKD. The segment covering 324–337 has biased composition (pro residues); sequence SATPPPQQHPPGPG. Over residues 367 to 380 the composition is skewed to low complexity; sequence QRQQQNRSQHRNLN. R385 is subject to Omega-N-methylarginine. Basic and acidic residues predominate over residues 385–399; sequence RGSHRSSHQDHLRKD. The segment at 389-448 is region H; it reads RSSHQDHLRKDPYANLMLQREKDWVSKIQMMQLQSTDPYLDDFYYQNYFEKLEKLSAAEE. Residues 398 to 770 are involved in nuclear speckle localization; that stretch reads KDPYANLMLQ…TKLQLVQGIR (373 aa). Residues 449–770 are region C; that stretch reads IQGDGPKKER…TKLQLVQGIR (322 aa).

This sequence belongs to the PAT1 family. In terms of assembly, interacts (via region A) with DDX6/RCK. Interacts (via region H and region C) with LSM1 and LSM4. Interacts (via region N) with DCP1A, DCP2, EDC3, EDC4 and XRN1. Interacts with the CCR4-NOT complex. Interacts with the Lsm-containing SMN-Sm protein complex. Interacts with EIF4ENIF1/4E-T. In terms of tissue distribution, ubiquitous.

Its subcellular location is the cytoplasm. The protein resides in the P-body. The protein localises to the nucleus. It localises to the PML body. It is found in the nucleus speckle. RNA-binding protein involved in deadenylation-dependent decapping of mRNAs, leading to the degradation of mRNAs. Acts as a scaffold protein that connects deadenylation and decapping machinery. Required for cytoplasmic mRNA processing body (P-body) assembly. Its function is as follows. (Microbial infection) In case of infection, required for translation and replication of hepatitis C virus (HCV). The polypeptide is Protein PAT1 homolog 1 (PATL1) (Homo sapiens (Human)).